Reading from the N-terminus, the 471-residue chain is ATP synthase subunit beta (471 aa).

153 to 160 (GGAGVGKT) is an ATP binding site.

This sequence belongs to the ATPase alpha/beta chains family. In terms of assembly, F-type ATPases have 2 components, CF(1) - the catalytic core - and CF(0) - the membrane proton channel. CF(1) has five subunits: alpha(3), beta(3), gamma(1), delta(1), epsilon(1). CF(0) has four main subunits: a(1), b(1), b'(1) and c(9-12).

Its subcellular location is the cell membrane. The catalysed reaction is ATP + H2O + 4 H(+)(in) = ADP + phosphate + 5 H(+)(out). Functionally, produces ATP from ADP in the presence of a proton gradient across the membrane. The catalytic sites are hosted primarily by the beta subunits. This is ATP synthase subunit beta from Roseiflexus castenholzii (strain DSM 13941 / HLO8).